The sequence spans 428 residues: MEFLDLPGRSRASGTVRLPGSKSISNRVLLLAALAEGVTDVYDVLDSDDTRYMLAALQALGVGVEDRGDNHWRVTGVAGAFPARQAELFLGNAGTAFRPLTAVLALSGGDYVLDGVARMHERPIGDLVDALRQLGGRIDYRGTLGFPPLHVHPPQAGADVAHIRGNVSSQFLTGLLMALPLRRLRTRVEVVGELISKPYIEITLAMLRRFGVEVARDGWQAFSVAADACYRSPREIYVEGDASSASYFLAAGAIGGGPVRVEGVGRDSVQGDVGFADALAAMGARIAMGPNWIEACAPAQGRLKAIDLDCNAIPDAAMTLAVAALFADGTTTLRNIASWRVKETDRIAAMATELRKVGATVEEGDDFLRVTPPETLRAGAVIDTYDDHRMAMCLSLVSLGGVAVRINDPGCVAKTFPGYFNAFAEIAR.

Residues K22, S23, and R27 each contribute to the 3-phosphoshikimate site. K22 is a binding site for phosphoenolpyruvate. Phosphoenolpyruvate is bound by residues G94 and R122. Residues S168, S169, Q170, S196, D315, and K342 each contribute to the 3-phosphoshikimate site. Residue Q170 participates in phosphoenolpyruvate binding. Catalysis depends on D315, which acts as the Proton acceptor. Positions 346, 389, and 414 each coordinate phosphoenolpyruvate.

The protein belongs to the EPSP synthase family. Monomer.

The protein resides in the cytoplasm. It carries out the reaction 3-phosphoshikimate + phosphoenolpyruvate = 5-O-(1-carboxyvinyl)-3-phosphoshikimate + phosphate. The protein operates within metabolic intermediate biosynthesis; chorismate biosynthesis; chorismate from D-erythrose 4-phosphate and phosphoenolpyruvate: step 6/7. Its function is as follows. Catalyzes the transfer of the enolpyruvyl moiety of phosphoenolpyruvate (PEP) to the 5-hydroxyl of shikimate-3-phosphate (S3P) to produce enolpyruvyl shikimate-3-phosphate and inorganic phosphate. The polypeptide is 3-phosphoshikimate 1-carboxyvinyltransferase (Thiobacillus denitrificans (strain ATCC 25259 / T1)).